Consider the following 278-residue polypeptide: Methyltransferase adrK (278 aa).

Residues 124–125 (DL), 151–152 (DV), and 152–153 (VL) each bind S-adenosyl-L-methionine.

The protein belongs to the class I-like SAM-binding methyltransferase superfamily. In terms of assembly, homodimer.

Its pathway is secondary metabolite biosynthesis; terpenoid biosynthesis. Methyltransferase; part of the gene cluster that mediates the biosynthesis of andrastins, meroterpenoid compounds that exhibit inhibitory activity against ras farnesyltransferase, suggesting that they could be promising leads for antitumor agents. The first step of the pathway is the synthesis of 3,5-dimethylorsellinic acid (DMOA) by the polyketide synthase adrD via condensation of one acetyl-CoA starter unit with 3 malonyl-CoA units and 2 methylations. DMAO is then converted to farnesyl-DMAO by the prenyltransferase adrG. The methyltransferase adrK catalyzes the methylation of the carboxyl group of farnesyl-DMAO to farnesyl-DMAO methyl ester which is further converted to epoxyfarnesyl-DMAO methyl ester by the FAD-dependent monooxygenase adrH. The terpene cyclase adrI then catalyzes the carbon skeletal rearrangement to generate the andrastin E, the first compound in the pathway having the andrastin scaffold, with the tetracyclic ring system. The post-cyclization tailoring enzymes adrF, adrE, adrJ, and adrA, are involved in the conversion of andrastin E into andrastin A. The short chain dehydrogenase adrF is responsible for the oxidation of the C-3 a hydroxyl group of andrastin E to yield the corresponding ketone, andrastin D. The ketoreductase adrE stereoselectively reduces the carbonyl moiety to reverse the stereochemistry of the C-3 position to yield andrastin F. The acetyltransferase adrJ is the acetyltransferase that attaches the acetyl group to the C-3 hydroxyl group of andrastin F to yield andrastin C. Finally, the cytochrome P450 monooxygenase adrA catalyzes two sequential oxidation reactions of the C-23 methyl group, to generate the corresponding alcohol andrastin B, and aldehyde andrastin A. The polypeptide is Methyltransferase adrK (Penicillium roqueforti).